The chain runs to 357 residues: MNSSARTRRDLPESPYLAAVNGRKPHRVPVWFMRQAGRSLPEYRALRAQHDMLSACFDAELVCEITLQPVRRHDVDAAILFSDIVVPLLGAGIDLDIVAGVGPVIASPVRTAADVAAMKPLERQRVQPIADAVRLLVSALVEVPLIGFAGAPFTLASYLIEGGPSRHHARTKAMMLADPDSWHALMEKLTDITVGFLRVQLDAGVDAVQVFDSWAGALSLANYRSYVQPHSARVFAALADYGVPMTHFGVGTAELLGAMSAALKPAPATVVGVDWRTALADAATRVMPGTALQGNLDPVVLLAGWPVVETAARAVVDDGRRAVDAGAAGHVFNLGHGVLPETDPGVLTELVSLVHSL.

Substrate contacts are provided by residues 34 to 38 (RQAGR), Asp83, Tyr158, Ser213, and His336.

Belongs to the uroporphyrinogen decarboxylase family. In terms of assembly, homodimer.

The protein resides in the cytoplasm. It catalyses the reaction uroporphyrinogen III + 4 H(+) = coproporphyrinogen III + 4 CO2. It functions in the pathway porphyrin-containing compound metabolism; protoporphyrin-IX biosynthesis; coproporphyrinogen-III from 5-aminolevulinate: step 4/4. Catalyzes the decarboxylation of four acetate groups of uroporphyrinogen-III to yield coproporphyrinogen-III. This chain is Uroporphyrinogen decarboxylase, found in Mycolicibacterium paratuberculosis (strain ATCC BAA-968 / K-10) (Mycobacterium paratuberculosis).